The chain runs to 261 residues: Short chain dehydrogenase/reductase astE (261 aa).

Residues Ile24, Asp70, Asn97, and Lys131 each contribute to the NADP(+) site. Residues Ser150 and Tyr164 each act as proton donor in the active site. Positions 164, 168, 197, and 199 each coordinate NADP(+). Lys168 functions as the Lowers pKa of active site Tyr in the catalytic mechanism.

This sequence belongs to the short-chain dehydrogenases/reductases (SDR) family.

Its pathway is secondary metabolite biosynthesis; terpenoid biosynthesis. Short chain dehydrogenase/reductase; part of the gene cluster that mediates the biosynthesis of astellolides, drimane-type sesquiterpene esters that show antimicrobial, anti-inflammatory, and anti-tumor activities. The first step in astellolide biosynthesis is performed by the sesquiterpene cyclase astC that catalyzes the formation of drimanyl pyrophosphate from farnesyl pyrophosphate. Drimanyl pyrophosphate is then dephosphorylated by the sesquiterpene phosphatase astI to produce drimanyl monophosphate which is further dephosphorylated to drim-8-ene-11-ol by atsK. Drim-8-ene-11-ol is converted to confertifolin, probably by the cytochrome P450 monooxygenase astD and/or the dehydrogenase astE. The cytochrome P450 monooxygenases astB, astF and astJ then hydroxylate confertifolin at C6, C14, or C15 to form trihydroxy confertifolin. The nonribosomal peptide synthetase astA catalyzes ester bond formation between trihydroxy contifolin and benzoic acid (BA) or 4-hydroxy benzoic acid (4HBA), leading to the formation of dideacetyl astellolides A and B, respectively. Finally, the O-acetyltransferase astG converts dideacetyl astellolides A and B into deacetyl astellolides A and B. The protein is Short chain dehydrogenase/reductase astE of Aspergillus oryzae (strain ATCC 42149 / RIB 40) (Yellow koji mold).